A 104-amino-acid polypeptide reads, in one-letter code: Putative thioredoxin-4 (104 aa).

One can recognise a Thioredoxin domain in the interval 2–104 (SKVTNVSINT…QLRKILDSMK (103 aa)). Residues C31 and C34 each act as nucleophile in the active site. Cysteines 31 and 34 form a disulfide.

It belongs to the thioredoxin family.

Its function is as follows. Participates in various redox reactions through the reversible oxidation of its active center dithiol to a disulfide and catalyzes dithiol-disulfide exchange reactions. The chain is Putative thioredoxin-4 (trxD) from Dictyostelium discoideum (Social amoeba).